Consider the following 312-residue polypeptide: Pantothenate synthetase (312 aa).

Residue 42–49 coordinates ATP; that stretch reads MGALHTGH. The active-site Proton donor is the H49. Q73 contacts (R)-pantoate. Q73 serves as a coordination point for beta-alanine. Residue 159 to 162 coordinates ATP; that stretch reads GEKD. Q165 serves as a coordination point for (R)-pantoate. ATP is bound by residues V188 and 196–199; that span reads LSSR.

Belongs to the pantothenate synthetase family. As to quaternary structure, homodimer.

Its subcellular location is the cytoplasm. The catalysed reaction is (R)-pantoate + beta-alanine + ATP = (R)-pantothenate + AMP + diphosphate + H(+). It participates in cofactor biosynthesis; (R)-pantothenate biosynthesis; (R)-pantothenate from (R)-pantoate and beta-alanine: step 1/1. Its function is as follows. Catalyzes the condensation of pantoate with beta-alanine in an ATP-dependent reaction via a pantoyl-adenylate intermediate. In Rhodococcus jostii (strain RHA1), this protein is Pantothenate synthetase.